The primary structure comprises 216 residues: ATP phosphoribosyltransferase (216 aa).

It belongs to the ATP phosphoribosyltransferase family. Short subfamily. In terms of assembly, heteromultimer composed of HisG and HisZ subunits.

It localises to the cytoplasm. The enzyme catalyses 1-(5-phospho-beta-D-ribosyl)-ATP + diphosphate = 5-phospho-alpha-D-ribose 1-diphosphate + ATP. It functions in the pathway amino-acid biosynthesis; L-histidine biosynthesis; L-histidine from 5-phospho-alpha-D-ribose 1-diphosphate: step 1/9. Its function is as follows. Catalyzes the condensation of ATP and 5-phosphoribose 1-diphosphate to form N'-(5'-phosphoribosyl)-ATP (PR-ATP). Has a crucial role in the pathway because the rate of histidine biosynthesis seems to be controlled primarily by regulation of HisG enzymatic activity. The polypeptide is ATP phosphoribosyltransferase (Acidovorax ebreus (strain TPSY) (Diaphorobacter sp. (strain TPSY))).